The chain runs to 405 residues: Cytochrome P450 107B1 (405 aa).

Residue C352 coordinates heme.

Belongs to the cytochrome P450 family. The cofactor is heme.

The protein resides in the cytoplasm. Functionally, not known, probably involved in the catabolism of octane and guaiacol. It displays a weak activity in the O-dealkylation of 7-ethoxycoumarin. The polypeptide is Cytochrome P450 107B1 (cyp107B1) (Saccharopolyspora erythraea (strain ATCC 11635 / DSM 40517 / JCM 4748 / NBRC 13426 / NCIMB 8594 / NRRL 2338)).